The sequence spans 197 residues: RNA pyrophosphohydrolase (197 aa).

The region spanning 6-149 is the Nudix hydrolase domain; the sequence is GYRPNVGIVI…KRDVYRRAMK (144 aa). Positions 38–59 match the Nudix box motif; sequence GGINEGETPEQAMFRELFEEVG. The tract at residues 170–197 is disordered; that stretch reads ETKKAETGKKQPYYHKYAPQNKKGRKRR.

Belongs to the Nudix hydrolase family. RppH subfamily. The cofactor is a divalent metal cation.

In terms of biological role, accelerates the degradation of transcripts by removing pyrophosphate from the 5'-end of triphosphorylated RNA, leading to a more labile monophosphorylated state that can stimulate subsequent ribonuclease cleavage. In Actinobacillus succinogenes (strain ATCC 55618 / DSM 22257 / CCUG 43843 / 130Z), this protein is RNA pyrophosphohydrolase.